The primary structure comprises 619 residues: tRNA uridine 5-carboxymethylaminomethyl modification enzyme MnmG (619 aa).

FAD contacts are provided by residues 14 to 19 (GAGHAG), Val-126, and Ser-181. 273-287 (GPRYCPSIEDKIMRF) serves as a coordination point for NAD(+). Residue Gln-370 coordinates FAD.

This sequence belongs to the MnmG family. Homodimer. Heterotetramer of two MnmE and two MnmG subunits. FAD serves as cofactor.

It localises to the cytoplasm. Functionally, NAD-binding protein involved in the addition of a carboxymethylaminomethyl (cmnm) group at the wobble position (U34) of certain tRNAs, forming tRNA-cmnm(5)s(2)U34. This is tRNA uridine 5-carboxymethylaminomethyl modification enzyme MnmG from Syntrophotalea carbinolica (strain DSM 2380 / NBRC 103641 / GraBd1) (Pelobacter carbinolicus).